The primary structure comprises 424 residues: Protein UL117 (424 aa).

A disordered region spans residues 57–82 (IVPTTSSSLAPPRDDERRPTPPLRPP).

Belongs to the herpesviridae U84 family.

The protein resides in the host nucleus. Plays a role in the inhibition of host DNA replication in the infected cell. Targets the mini-chromosome maintenance (MCM) complex and blocks the accumulation of MCM proteins and their loading onto host chromatin. The polypeptide is Protein UL117 (UL117) (Human cytomegalovirus (strain AD169) (HHV-5)).